Reading from the N-terminus, the 721-residue chain is Photosystem I P700 chlorophyll a apoprotein A1 (721 aa).

Helical transmembrane passes span 61–84 (VFSA…FHGA), 147–170 (LYCT…FHYH), 186–210 (LNHH…HVSL), 282–300 (TAHH…GHMY), 337–360 (WHAQ…HHMY), 376–402 (LSLF…IFMV), 424–446 (AIVS…LYIH), and 522–540 (FLVH…LILL). Cys-564 and Cys-573 together coordinate [4Fe-4S] cluster. The next 2 helical transmembrane spans lie at 580–601 (HVFL…HFSW) and 655–677 (LSAY…MFLF). Position 666 (His-666) interacts with chlorophyll a'. Chlorophyll a contacts are provided by Met-674 and Tyr-682. Residue Trp-683 coordinates phylloquinone. Residues 715 to 721 (AVGVAHY) form a helical membrane-spanning segment.

The protein belongs to the PsaA/PsaB family. In terms of assembly, the PsaA/B heterodimer binds the P700 chlorophyll special pair and subsequent electron acceptors. PSI consists of a core antenna complex that captures photons, and an electron transfer chain that converts photonic excitation into a charge separation. The eukaryotic PSI reaction center is composed of at least 11 subunits. Requires P700 is a chlorophyll a/chlorophyll a' dimer, A0 is one or more chlorophyll a, A1 is one or both phylloquinones and FX is a shared 4Fe-4S iron-sulfur center. as cofactor.

Its subcellular location is the plastid. It localises to the chloroplast thylakoid membrane. It carries out the reaction reduced [plastocyanin] + hnu + oxidized [2Fe-2S]-[ferredoxin] = oxidized [plastocyanin] + reduced [2Fe-2S]-[ferredoxin]. In terms of biological role, psaA and PsaB bind P700, the primary electron donor of photosystem I (PSI), as well as the electron acceptors A0, A1 and FX. PSI is a plastocyanin-ferredoxin oxidoreductase, converting photonic excitation into a charge separation, which transfers an electron from the donor P700 chlorophyll pair to the spectroscopically characterized acceptors A0, A1, FX, FA and FB in turn. Oxidized P700 is reduced on the lumenal side of the thylakoid membrane by plastocyanin. The sequence is that of Photosystem I P700 chlorophyll a apoprotein A1 from Ginkgo biloba (Ginkgo).